The chain runs to 519 residues: Protein amnionless (519 aa).

Residues 1–19 form the signal peptide; sequence MGAPGRVLLWLQLCALTRA. Topologically, residues 20-430 are extracellular; that stretch reads AYKLWVPNTY…NAPGARSDLM (411 aa). 2 N-linked (GlcNAc...) asparagine glycosylation sites follow: N35 and N39. Intrachain disulfides connect C43–C152, C193–C267, C259–C265, C277–C303, C288–C304, and C293–C307. The segment at 67 to 143 is interaction with CUBN; sequence SDMEELQDRK…VLASGAGFSA (77 aa). A VWFC domain is found at 256–308; that stretch reads PEACADPSGCVCGNAEVQPWICAALLQPLGGRCPQAACQDALRPEGQCCDLCG. Residues 431 to 451 traverse the membrane as a helical segment; that stretch reads GGLVAALLLLLLVLLVAALLL. The Cytoplasmic segment spans residues 452 to 519; sequence RRAGRLRWSR…YGEAEAEAEA (68 aa).

As to quaternary structure, interacts (via extracellular region) with CUBN/cubilin, giving rise to a huge complex containing one AMN chain and three CUBN chains. N-glycosylated. Post-translationally, a soluble form arises by proteolytic removal of the membrane anchor. As to expression, detected in kidney cortex (at protein level).

The protein resides in the apical cell membrane. It is found in the cell membrane. Its subcellular location is the endosome membrane. It localises to the membrane. The protein localises to the coated pit. Its function is as follows. Membrane-bound component of the endocytic receptor formed by AMN and CUBN. Required for normal CUBN glycosylation and trafficking to the cell surface. The complex formed by AMN and CUBN is required for efficient absorption of vitamin B12. Required for normal CUBN-mediated protein transport in the kidney. This chain is Protein amnionless (AMN), found in Sus scrofa (Pig).